The sequence spans 705 residues: Methionine--tRNA ligase (705 aa).

A 'HIGH' region motif is present at residues 17-27 (PYANGPVHLGH). Zn(2+)-binding residues include Cys149, Cys152, Cys162, and Cys165. Positions 347–351 (KFSKS) match the 'KMSKS' region motif. Lys350 is a binding site for ATP. In terms of domain architecture, tRNA-binding spans 604 to 705 (EFQKVDLRVA…GEGINGQSVQ (102 aa)).

It belongs to the class-I aminoacyl-tRNA synthetase family. MetG type 1 subfamily. Homodimer. Zn(2+) serves as cofactor.

It localises to the cytoplasm. It catalyses the reaction tRNA(Met) + L-methionine + ATP = L-methionyl-tRNA(Met) + AMP + diphosphate. Its function is as follows. Is required not only for elongation of protein synthesis but also for the initiation of all mRNA translation through initiator tRNA(fMet) aminoacylation. The sequence is that of Methionine--tRNA ligase from Chlorobium chlorochromatii (strain CaD3).